Reading from the N-terminus, the 180-residue chain is 3-hydroxyanthranilate 3,4-dioxygenase (180 aa).

Arg44 lines the O2 pocket. Fe cation is bound by residues His48, Glu54, and His92. Residue Glu54 participates in substrate binding. Residues Arg96 and Glu106 each contribute to the substrate site. 4 residues coordinate a divalent metal cation: Cys121, Cys124, Cys158, and Cys161.

It belongs to the 3-HAO family. It depends on Fe(2+) as a cofactor.

It localises to the cytoplasm. The catalysed reaction is 3-hydroxyanthranilate + O2 = (2Z,4Z)-2-amino-3-carboxymuconate 6-semialdehyde. It functions in the pathway cofactor biosynthesis; NAD(+) biosynthesis; quinolinate from L-kynurenine: step 3/3. In terms of biological role, catalyzes the oxidative ring opening of 3-hydroxyanthranilate to 2-amino-3-carboxymuconate semialdehyde, which spontaneously cyclizes to quinolinate. The sequence is that of 3-hydroxyanthranilate 3,4-dioxygenase (bna1) from Neurospora crassa (strain ATCC 24698 / 74-OR23-1A / CBS 708.71 / DSM 1257 / FGSC 987).